We begin with the raw amino-acid sequence, 254 residues long: Phosphatidylglycerol--prolipoprotein diacylglyceryl transferase (254 aa).

The next 3 membrane-spanning stretches (helical) occupy residues 11–31 (LAIRWYGVIISIGAALGLLLA), 49–69 (FLIAFPSAIIGARLYYVIFEF), and 84–104 (QGGLAIHGGIIFGVLAVYIYL). Arg130 serves as a coordination point for a 1,2-diacyl-sn-glycero-3-phospho-(1'-sn-glycerol). 3 helical membrane-spanning segments follow: residues 169-189 (PTFLYESIWNFIVCIFLVYLL), 196-216 (GIVFMAYIGLYSLGRFFIEGL), and 228-248 (VAQLISVLGIILSIFFIYNII).

Belongs to the Lgt family.

It is found in the cell membrane. The enzyme catalyses L-cysteinyl-[prolipoprotein] + a 1,2-diacyl-sn-glycero-3-phospho-(1'-sn-glycerol) = an S-1,2-diacyl-sn-glyceryl-L-cysteinyl-[prolipoprotein] + sn-glycerol 1-phosphate + H(+). It participates in protein modification; lipoprotein biosynthesis (diacylglyceryl transfer). In terms of biological role, catalyzes the transfer of the diacylglyceryl group from phosphatidylglycerol to the sulfhydryl group of the N-terminal cysteine of a prolipoprotein, the first step in the formation of mature lipoproteins. This is Phosphatidylglycerol--prolipoprotein diacylglyceryl transferase from Clostridium botulinum (strain Loch Maree / Type A3).